We begin with the raw amino-acid sequence, 487 residues long: UDP-N-acetylmuramoyl-L-alanyl-D-glutamate--2,6-diaminopimelate ligase (487 aa).

Residues leucine 23 and serine 25 each coordinate UDP-N-acetyl-alpha-D-muramoyl-L-alanyl-D-glutamate. 108–114 (GTNGKTS) contributes to the ATP binding site. Residues 150–151 (TT), serine 177, glutamine 183, and arginine 185 contribute to the UDP-N-acetyl-alpha-D-muramoyl-L-alanyl-D-glutamate site. Lysine 217 is modified (N6-carboxylysine). Meso-2,6-diaminopimelate-binding positions include arginine 378, 402 to 405 (DNPR), glycine 453, and glutamate 457. Residues 402–405 (DNPR) carry the Meso-diaminopimelate recognition motif motif.

Belongs to the MurCDEF family. MurE subfamily. Requires Mg(2+) as cofactor. In terms of processing, carboxylation is probably crucial for Mg(2+) binding and, consequently, for the gamma-phosphate positioning of ATP.

It localises to the cytoplasm. The catalysed reaction is UDP-N-acetyl-alpha-D-muramoyl-L-alanyl-D-glutamate + meso-2,6-diaminopimelate + ATP = UDP-N-acetyl-alpha-D-muramoyl-L-alanyl-gamma-D-glutamyl-meso-2,6-diaminopimelate + ADP + phosphate + H(+). It functions in the pathway cell wall biogenesis; peptidoglycan biosynthesis. Its function is as follows. Catalyzes the addition of meso-diaminopimelic acid to the nucleotide precursor UDP-N-acetylmuramoyl-L-alanyl-D-glutamate (UMAG) in the biosynthesis of bacterial cell-wall peptidoglycan. The sequence is that of UDP-N-acetylmuramoyl-L-alanyl-D-glutamate--2,6-diaminopimelate ligase from Ectopseudomonas mendocina (strain ymp) (Pseudomonas mendocina).